Here is a 427-residue protein sequence, read N- to C-terminus: Glutamate-1-semialdehyde 2,1-aminomutase (427 aa).

At Lys267 the chain carries N6-(pyridoxal phosphate)lysine.

This sequence belongs to the class-III pyridoxal-phosphate-dependent aminotransferase family. HemL subfamily. Homodimer. Pyridoxal 5'-phosphate serves as cofactor.

Its subcellular location is the cytoplasm. It catalyses the reaction (S)-4-amino-5-oxopentanoate = 5-aminolevulinate. It functions in the pathway porphyrin-containing compound metabolism; protoporphyrin-IX biosynthesis; 5-aminolevulinate from L-glutamyl-tRNA(Glu): step 2/2. The chain is Glutamate-1-semialdehyde 2,1-aminomutase from Geotalea uraniireducens (strain Rf4) (Geobacter uraniireducens).